Consider the following 302-residue polypeptide: Porphobilinogen deaminase (302 aa).

Position 234 is an S-(dipyrrolylmethanemethyl)cysteine (Cys234).

This sequence belongs to the HMBS family. Monomer. The cofactor is dipyrromethane.

It carries out the reaction 4 porphobilinogen + H2O = hydroxymethylbilane + 4 NH4(+). It functions in the pathway porphyrin-containing compound metabolism; protoporphyrin-IX biosynthesis; coproporphyrinogen-III from 5-aminolevulinate: step 2/4. Its function is as follows. Tetrapolymerization of the monopyrrole PBG into the hydroxymethylbilane pre-uroporphyrinogen in several discrete steps. The chain is Porphobilinogen deaminase from Corynebacterium glutamicum (strain R).